The primary structure comprises 276 residues: Small ribosomal subunit protein uS2 (276 aa).

This sequence belongs to the universal ribosomal protein uS2 family.

The polypeptide is Small ribosomal subunit protein uS2 (Chlamydia caviae (strain ATCC VR-813 / DSM 19441 / 03DC25 / GPIC) (Chlamydophila caviae)).